The following is a 378-amino-acid chain: Putative odorant receptor 71a (378 aa).

The Cytoplasmic segment spans residues 1–37 (MDYDRIRPVRFLTGVLKWWRLWPRKESVSTPDWTNWQ). A helical transmembrane segment spans residues 38–58 (AYALHVPFTFLFVLLLWLEAI). The Extracellular portion of the chain corresponds to 59–66 (KSRDIQHT). Residues 67-87 (ADVLLICLTTTALGGKVINIW) form a helical membrane-spanning segment. Residues 88–127 (KYAHVAQGILSEWSTWDLFELRSKQEVDMWRFEHRRFNRV) lie on the Cytoplasmic side of the membrane. Residues 128 to 148 (FMFYCLCSAGVIPFIVIQPLF) traverse the membrane as a helical segment. Residues 149–166 (DIPNRLPFWMWTPFDWQQ) are Extracellular-facing. Residues 167 to 187 (PVLFWYAFIYQATTIPIACAC) form a helical membrane-spanning segment. Over 188–255 (NVTMDAVNWY…IFISKSTFTQ (68 aa)) the chain is Cytoplasmic. Residues 256–276 (ILVSSLIICFTIYSMQMSPVL) traverse the membrane as a helical segment. At 277–280 (QDLP) the chain is on the extracellular side. Residues 281 to 301 (GFAAMMQYLVAMIMQVMLPTI) traverse the membrane as a helical segment. The Cytoplasmic portion of the chain corresponds to 302-343 (YGNAVIDSANMLTDSMYNSDWPDMNCRMRRLVLMFMVYLNRP). The chain crosses the membrane as a helical span at residues 344–364 (VTLKAGGFFHIGLPLFTKTMN). Residues 365-378 (QAYSLLALLLNMNQ) are Extracellular-facing.

It belongs to the insect chemoreceptor superfamily. Heteromeric odorant receptor channel (TC 1.A.69) family. Or2a subfamily. In terms of assembly, interacts with Orco. Complexes exist early in the endomembrane system in olfactory sensory neurons (OSNs), coupling these complexes to the conserved ciliary trafficking pathway. As to expression, expressed in olfactory sensory neurons in the maxillary palp.

It is found in the cell membrane. Odorant receptor which mediates acceptance or avoidance behavior, depending on its substrates. The odorant receptor repertoire encodes a large collection of odor stimuli that vary widely in identity, intensity, and duration. May form a complex with Orco to form odorant-sensing units, providing sensitive and prolonged odorant signaling and calcium permeability. This is Putative odorant receptor 71a (Or71a) from Drosophila melanogaster (Fruit fly).